The chain runs to 267 residues: Cell division protein FtsQ (267 aa).

Residues 1 to 32 (MRKKTSSNKKNTAKKNNNISLHRKLGLIYKKT) lie on the Cytoplasmic side of the membrane. Residues 33-53 (ILILKIVLIIFICLFAFTKYF) form a helical membrane-spanning segment. Over 54–267 (ASLKSYLKTN…DKNKYYIEKY (214 aa)) the chain is Periplasmic. In terms of domain architecture, POTRA spans 73–141 (FKLENVIIEG…STIYIKLFER (69 aa)).

This sequence belongs to the FtsQ/DivIB family. FtsQ subfamily.

Its subcellular location is the cell inner membrane. Functionally, essential cell division protein. In Rickettsia bellii (strain RML369-C), this protein is Cell division protein FtsQ.